The primary structure comprises 94 residues: HssA/B-like protein 49 (94 aa).

A disordered region spans residues 1–20 (MTLFSSISSISNPMTSSKSS).

Belongs to the hssA/B family.

The protein is HssA/B-like protein 49 (hssl49) of Dictyostelium discoideum (Social amoeba).